The primary structure comprises 209 residues: Imidazole glycerol phosphate synthase subunit HisH (209 aa).

One can recognise a Glutamine amidotransferase type-1 domain in the interval 1-205; it reads MIAIIDYGMG…KGVVKQWKSS (205 aa). C79 (nucleophile) is an active-site residue. Residues H180 and E182 contribute to the active site.

Heterodimer of HisH and HisF.

It is found in the cytoplasm. The catalysed reaction is 5-[(5-phospho-1-deoxy-D-ribulos-1-ylimino)methylamino]-1-(5-phospho-beta-D-ribosyl)imidazole-4-carboxamide + L-glutamine = D-erythro-1-(imidazol-4-yl)glycerol 3-phosphate + 5-amino-1-(5-phospho-beta-D-ribosyl)imidazole-4-carboxamide + L-glutamate + H(+). It catalyses the reaction L-glutamine + H2O = L-glutamate + NH4(+). It participates in amino-acid biosynthesis; L-histidine biosynthesis; L-histidine from 5-phospho-alpha-D-ribose 1-diphosphate: step 5/9. IGPS catalyzes the conversion of PRFAR and glutamine to IGP, AICAR and glutamate. The HisH subunit catalyzes the hydrolysis of glutamine to glutamate and ammonia as part of the synthesis of IGP and AICAR. The resulting ammonia molecule is channeled to the active site of HisF. This chain is Imidazole glycerol phosphate synthase subunit HisH, found in Bacillus cytotoxicus (strain DSM 22905 / CIP 110041 / 391-98 / NVH 391-98).